A 127-amino-acid chain; its full sequence is MYPHLTGLGIHDPSQIERYSLRQEAHKDVLKIYFHKQKGEFFAKSVKFKYPRQVKNVLVDSGSHQYKEVTEINRNLTLVIDELNKITKPPKQEDVDIKQKILTDLKHLEKVVASKIAEIEADLEKLK.

Belongs to the UPF0325 family.

This is UPF0325 protein VV1_1856 from Vibrio vulnificus (strain CMCP6).